A 246-amino-acid chain; its full sequence is Probable ABC transporter permease protein BMEII0107 (246 aa).

A run of 6 helical transmembrane segments spans residues 12-32 (LLSF…GAVV), 63-83 (VLSG…LMGW), 94-114 (WVQF…IVTL), 122-142 (IFVI…QGVI), 172-192 (VPFI…TVVA), and 211-231 (LYYD…LGLF). The ABC transmembrane type-1 domain maps to 56–236 (IFASLRRVLS…ILGLFMDRLL (181 aa)).

It belongs to the binding-protein-dependent transport system permease family. In terms of assembly, the complex is composed of two ATP-binding proteins (BMEII0108), two transmembrane proteins (BMEII0107) and a solute-binding protein (BMEII0109).

It localises to the cell inner membrane. Functionally, probably part of an ABC transporter complex. Probably responsible for the translocation of the substrate across the membrane. The chain is Probable ABC transporter permease protein BMEII0107 from Brucella melitensis biotype 1 (strain ATCC 23456 / CCUG 17765 / NCTC 10094 / 16M).